The following is a 41-amino-acid chain: Alpha-1B-glycoprotein (41 aa).

Residue Asn-23 is glycosylated (N-linked (GlcNAc...) asparagine).

Interacts with CRISP3. In terms of processing, glycosylated. In terms of tissue distribution, plasma.

It is found in the secreted. The polypeptide is Alpha-1B-glycoprotein (A1BG) (Equus caballus (Horse)).